A 207-amino-acid chain; its full sequence is High mobility group protein B2 (207 aa).

2 DNA-binding regions (HMG box) span residues 9-79 (PRGK…KNYV) and 95-163 (PKRP…AAYR). Cysteine sulfonic acid (-SO3H); alternate occurs at positions 23 and 45. The cysteines at positions 23 and 45 are disulfide-linked. Residues 52–76 (MSSKEKGKFEEMAKGDKARYDREMK) are compositionally biased toward basic and acidic residues. The tract at residues 52 to 102 (MSSKEKGKFEEMAKGDKARYDREMKNYVPPKGEKKGKKKDPNAPKRPPSAF) is disordered. Cysteine 106 carries the cysteine sulfonic acid (-SO3H) modification. Over residues 162–172 (YRAKSKSDAGK) the composition is skewed to basic and acidic residues. Positions 162–207 (YRAKSKSDAGKKGPGRPAGSKKKAEPEEEEEEEEDEEEEEEEEDEE) are disordered. Over residues 187-207 (PEEEEEEEEDEEEEEEEEDEE) the composition is skewed to acidic residues.

Belongs to the HMGB family. Post-translationally, reduction/oxidation of cysteine residues Cys-23, Cys-45 and Cys-106 and a possible intramolecular disulfide bond involving Cys-23 and Cys-45 give rise to different redox forms with specific functional activities in various cellular compartments: 1- fully reduced HMGB2 (HMGB2C23hC45hC106h), 2- disulfide HMGB2 (HMGB2C23-C45C106h) and 3- sulfonyl HMGB2 (HMGB2C23soC45soC106so).

It localises to the nucleus. The protein resides in the chromosome. It is found in the cytoplasm. Its subcellular location is the secreted. Multifunctional protein with various roles in different cellular compartments. May act in a redox sensitive manner. Associates with chromatin and binds DNA with a preference to non-canonical DNA structures such as single-stranded DNA. Can bent DNA and enhance DNA flexibility by looping thus providing a mechanism to promote activities on various gene promoters. Proposed to be involved in the innate immune response to nucleic acids by acting as a cytoplasmic promiscuous immunogenic DNA/RNA sensor. Involved in inflammatory response to antigenic stimulus coupled with pro-inflammatory activity. This Gallus gallus (Chicken) protein is High mobility group protein B2 (HMGB2).